The sequence spans 371 residues: MSFRKVNIIILVLAVALFLLVLHHNFLSLSSLLRNEVTDSGIVGPQPIDFVPNALRHAVDGRQEEIPVVIAASEDRLGGAIAAINSIQHNTRSNVIFYIVTLNNTADHLRSWLNSDSLKSIRYKIVNFDPKLLEGKVKEDPDQGESMKPLTFARFYLPILVPSAKKAIYMDDDVIVQGDILALYNTALKPGHAAAFSEDCDSASTKVVIRGAGNQYNYIGYLDYKKERIRKLSMKASTCSFNPGVFVANLTEWKRQNITNQLEKWMKLNVEEGLYSRTLAGSITTPPLLIVFYQQHSTIDPMWNVRHLGSSAGKRYSPQFVKAAKLLHWNGHLKPWGRTASYTDVWEKWYIPDPTGKFNLIRRYTEISNIK.

Over 1–7 (MSFRKVN) the chain is Cytoplasmic. A helical; Signal-anchor for type II membrane protein transmembrane segment spans residues 8–28 (IIILVLAVALFLLVLHHNFLS). Residues 29-371 (LSSLLRNEVT…RRYTEISNIK (343 aa)) are Lumenal-facing. N-linked (GlcNAc...) asparagine glycosylation is found at Asn249 and Asn257.

The protein belongs to the glycosyltransferase 8 family.

It is found in the membrane. The chain is Glycosyltransferase 8 domain-containing protein 1 (GLT8D1) from Homo sapiens (Human).